The chain runs to 420 residues: 2',3'-cyclic-nucleotide 3'-phosphodiesterase (420 aa).

Ser9 carries the phosphoserine modification. Tyr110 carries the post-translational modification Phosphotyrosine. Residues Ser169, Ser227, and Ser239 each carry the phosphoserine modification. Residue His250 is the Proton acceptor of the active site. Thr252 provides a ligand contact to substrate. Residue His329 is the Proton donor of the active site. A substrate-binding site is contributed by Thr331. Ser358 bears the Phosphoserine mark. The residue at position 417 (Cys417) is a Cysteine methyl ester. Residue Cys417 is the site of S-farnesyl cysteine attachment. Positions Thr418–Ile420 are cleaved as a propeptide — removed in mature form.

It belongs to the 2H phosphoesterase superfamily. CNPase family. Exists as monomers and homodimers.

It localises to the membrane. Its subcellular location is the melanosome. It carries out the reaction a nucleoside 2',3'-cyclic phosphate + H2O = a nucleoside 2'-phosphate + H(+). In terms of biological role, catalyzes the formation of 2'-nucleotide products from 2',3'-cyclic substrates. May participate in RNA metabolism in the myelinating cell, CNP is the third most abundant protein in central nervous system myelin. This Mus musculus (Mouse) protein is 2',3'-cyclic-nucleotide 3'-phosphodiesterase.